The chain runs to 138 residues: Small ribosomal subunit protein uS11c (138 aa).

The tract at residues 1–22 is disordered; it reads MTKPIPRIGSRRNGRIGSRKNA. Positions 9-22 are enriched in basic residues; sequence GSRRNGRIGSRKNA.

It belongs to the universal ribosomal protein uS11 family. Part of the 30S ribosomal subunit.

The protein resides in the plastid. Its subcellular location is the chloroplast. This is Small ribosomal subunit protein uS11c from Dioscorea elephantipes (Elephant's foot yam).